The chain runs to 492 residues: Membrane-bound lytic murein transglycosylase F (492 aa).

A signal peptide spans 1 to 18 (MKGLFLRIIAIVALLLWA). A non-LT domain region spans residues 19-268 (IDMVFPWQQI…RIEEKYFNHL (250 aa)). An LT domain region spans residues 270–492 (QFDYVDTRSY…DTLATTVTTQ (223 aa)). The active site involves Glu-313.

This sequence in the N-terminal section; belongs to the bacterial solute-binding protein 3 family. In the C-terminal section; belongs to the transglycosylase Slt family.

The protein localises to the cell outer membrane. The enzyme catalyses Exolytic cleavage of the (1-&gt;4)-beta-glycosidic linkage between N-acetylmuramic acid (MurNAc) and N-acetylglucosamine (GlcNAc) residues in peptidoglycan, from either the reducing or the non-reducing ends of the peptidoglycan chains, with concomitant formation of a 1,6-anhydrobond in the MurNAc residue.. In terms of biological role, murein-degrading enzyme that degrades murein glycan strands and insoluble, high-molecular weight murein sacculi, with the concomitant formation of a 1,6-anhydromuramoyl product. Lytic transglycosylases (LTs) play an integral role in the metabolism of the peptidoglycan (PG) sacculus. Their lytic action creates space within the PG sacculus to allow for its expansion as well as for the insertion of various structures such as secretion systems and flagella. This Pasteurella multocida (strain Pm70) protein is Membrane-bound lytic murein transglycosylase F.